The chain runs to 198 residues: Dephospho-CoA kinase (198 aa).

Residues 3–198 (IVGITGGIGS…LLAKERLELA (196 aa)) enclose the DPCK domain. 11–16 (GSGKTT) contacts ATP.

It belongs to the CoaE family.

It localises to the cytoplasm. It carries out the reaction 3'-dephospho-CoA + ATP = ADP + CoA + H(+). The protein operates within cofactor biosynthesis; coenzyme A biosynthesis; CoA from (R)-pantothenate: step 5/5. Functionally, catalyzes the phosphorylation of the 3'-hydroxyl group of dephosphocoenzyme A to form coenzyme A. This is Dephospho-CoA kinase from Dehalococcoides mccartyi (strain ATCC BAA-2266 / KCTC 15142 / 195) (Dehalococcoides ethenogenes (strain 195)).